Consider the following 448-residue polypeptide: Phosphoglucosamine mutase (448 aa).

The Phosphoserine intermediate role is filled by serine 100. The Mg(2+) site is built by serine 100, aspartate 240, aspartate 242, and aspartate 244. Residue serine 100 is modified to Phosphoserine.

Belongs to the phosphohexose mutase family. Mg(2+) serves as cofactor. Post-translationally, activated by phosphorylation.

It carries out the reaction alpha-D-glucosamine 1-phosphate = D-glucosamine 6-phosphate. Functionally, catalyzes the conversion of glucosamine-6-phosphate to glucosamine-1-phosphate. The polypeptide is Phosphoglucosamine mutase (Clostridium tetani (strain Massachusetts / E88)).